The following is a 130-amino-acid chain: KIYERCELARTLKKLGLDGYKGVSLANWMCLAKWESSYNTRATNYNPGDKSTDYGIFQINSRYWCNDGKTPRAVNACHIPCSDLLKDDITQAVACAKRVVSDPQGIRAWVAWRNHCQNQDLTPYIRGCGV.

The region spanning 1-130 (KIYERCELAR…LTPYIRGCGV (130 aa)) is the C-type lysozyme domain. 4 disulfide bridges follow: Cys-6–Cys-128, Cys-30–Cys-116, Cys-65–Cys-81, and Cys-77–Cys-95. Catalysis depends on residues Glu-35 and Asp-53.

It belongs to the glycosyl hydrolase 22 family. Monomer.

The protein resides in the secreted. It carries out the reaction Hydrolysis of (1-&gt;4)-beta-linkages between N-acetylmuramic acid and N-acetyl-D-glucosamine residues in a peptidoglycan and between N-acetyl-D-glucosamine residues in chitodextrins.. Functionally, lysozymes have primarily a bacteriolytic function; those in tissues and body fluids are associated with the monocyte-macrophage system and enhance the activity of immunoagents. The sequence is that of Lysozyme C (LYZ) from Oryctolagus cuniculus (Rabbit).